Reading from the N-terminus, the 334-residue chain is Beta-hexosaminidase (334 aa).

Residues Asp60, Arg68, Arg133, and 163–164 (KH) each bind substrate. The active-site Proton donor/acceptor is His176. Residue Asp247 is the Nucleophile of the active site.

The protein belongs to the glycosyl hydrolase 3 family. NagZ subfamily.

Its subcellular location is the cytoplasm. It catalyses the reaction Hydrolysis of terminal non-reducing N-acetyl-D-hexosamine residues in N-acetyl-beta-D-hexosaminides.. Its pathway is cell wall biogenesis; peptidoglycan recycling. Functionally, plays a role in peptidoglycan recycling by cleaving the terminal beta-1,4-linked N-acetylglucosamine (GlcNAc) from peptide-linked peptidoglycan fragments, giving rise to free GlcNAc, anhydro-N-acetylmuramic acid and anhydro-N-acetylmuramic acid-linked peptides. The chain is Beta-hexosaminidase from Xanthomonas euvesicatoria pv. vesicatoria (strain 85-10) (Xanthomonas campestris pv. vesicatoria).